Reading from the N-terminus, the 421-residue chain is Testin (421 aa).

Residues 92–199 (MILTNPVAAK…GDVKLPREMD (108 aa)) form the PET domain. A disordered region spans residues 134–164 (KQPVAGSEGAQYRKKQLAKQLPAHDQDPSKC). The segment covering 155–164 (PAHDQDPSKC) has biased composition (basic and acidic residues). LIM zinc-binding domains lie at 234–297 (YSCY…CDSE), 299–359 (PRCA…NHAV), and 362–421 (QGCH…KMMS).

Belongs to the prickle / espinas / testin family. In terms of assembly, interacts via LIM domain 1 with ZYX. Interacts (via LIM domain 3) with ENAH and VASP. Interacts with ALKBH4, talin, actin, alpha-actinin, GRIP1 and PXN. Interacts (via LIM domain 2) with ACTL7A (via N-terminus). Heterodimer with ACTL7A; the heterodimer interacts with ENAH to form a heterotrimer.

The protein localises to the cytoplasm. The protein resides in the cell junction. It is found in the focal adhesion. In terms of biological role, scaffold protein that may play a role in cell adhesion, cell spreading and in the reorganization of the actin cytoskeleton. Plays a role in the regulation of cell proliferation. May act as a tumor suppressor. In Rhinolophus ferrumequinum (Greater horseshoe bat), this protein is Testin (TES).